We begin with the raw amino-acid sequence, 309 residues long: D-alanine--D-alanine ligase (309 aa).

Positions 109–304 (KMVWAACGLP…FTALCLAILE (196 aa)) constitute an ATP-grasp domain. 135-190 (VAELGLPIFVKPVHEGSSMGATKVTAASQLKAAWERAARFDDLVLAEEFIVGAELT) is an ATP binding site. Mg(2+)-binding residues include Asp-258, Glu-271, and Asn-273.

The protein belongs to the D-alanine--D-alanine ligase family. Requires Mg(2+) as cofactor. Mn(2+) serves as cofactor.

It localises to the cytoplasm. The enzyme catalyses 2 D-alanine + ATP = D-alanyl-D-alanine + ADP + phosphate + H(+). The protein operates within cell wall biogenesis; peptidoglycan biosynthesis. In terms of biological role, cell wall formation. The protein is D-alanine--D-alanine ligase of Aromatoleum aromaticum (strain DSM 19018 / LMG 30748 / EbN1) (Azoarcus sp. (strain EbN1)).